A 308-amino-acid polypeptide reads, in one-letter code: Acetaldehyde dehydrogenase 1 (308 aa).

Residue 10 to 13 (SGNI) participates in NAD(+) binding. The active-site Acyl-thioester intermediate is Cys-128. Residues 159-167 (SAGPGTRAN) and Asn-285 contribute to the NAD(+) site.

This sequence belongs to the acetaldehyde dehydrogenase family.

The enzyme catalyses acetaldehyde + NAD(+) + CoA = acetyl-CoA + NADH + H(+). The chain is Acetaldehyde dehydrogenase 1 from Salinispora arenicola (strain CNS-205).